We begin with the raw amino-acid sequence, 178 residues long: MTEIPSSFVLPDPEWIYRVGIGQDSHRFLPDEDPKPCILGGIIFENTPGFEANSDGDVVFHAICNAFSSVTHKGILGGLADELLKTKGITDSVVYLQEAIASLKPTQRVSHLAITIEGKRPKLLPQLPSMRKRIAEVLHIPLDSINITATSGEGLTAMGQGYGVQCFCVLTIMEYCRY.

A divalent metal cation contacts are provided by aspartate 24, histidine 26, and histidine 61. 24-26 (DSH) lines the 4-CDP-2-C-methyl-D-erythritol 2-phosphate pocket. 150–153 (TSGE) provides a ligand contact to 4-CDP-2-C-methyl-D-erythritol 2-phosphate.

This sequence belongs to the IspF family. In terms of assembly, homotrimer. A divalent metal cation serves as cofactor.

The catalysed reaction is 4-CDP-2-C-methyl-D-erythritol 2-phosphate = 2-C-methyl-D-erythritol 2,4-cyclic diphosphate + CMP. It functions in the pathway isoprenoid biosynthesis; isopentenyl diphosphate biosynthesis via DXP pathway; isopentenyl diphosphate from 1-deoxy-D-xylulose 5-phosphate: step 4/6. In terms of biological role, involved in the biosynthesis of isopentenyl diphosphate (IPP) and dimethylallyl diphosphate (DMAPP), two major building blocks of isoprenoid compounds. Catalyzes the conversion of 4-diphosphocytidyl-2-C-methyl-D-erythritol 2-phosphate (CDP-ME2P) to 2-C-methyl-D-erythritol 2,4-cyclodiphosphate (ME-CPP) with a corresponding release of cytidine 5-monophosphate (CMP). In Chlamydia trachomatis serovar L2b (strain UCH-1/proctitis), this protein is 2-C-methyl-D-erythritol 2,4-cyclodiphosphate synthase.